The sequence spans 213 residues: Sclerostin (213 aa).

The N-terminal stretch at Met-1–Gly-23 is a signal peptide. Residues Gly-41–Glu-71 are disordered. An N-linked (GlcNAc...) asparagine glycan is attached at Asn-53. Disulfide bonds link Cys-80–Cys-134, Cys-94–Cys-148, Cys-105–Cys-165, and Cys-109–Cys-167. The region spanning Glu-82–Arg-172 is the CTCK domain. N-linked (GlcNAc...) asparagine glycosylation occurs at Asn-175. Positions Glu-178–Tyr-213 are disordered. Over residues Gln-190–Ser-201 the composition is skewed to basic residues.

It belongs to the sclerostin family. Interacts with LRP4 (via the extracellular domain); the interaction facilitates the inhibition of Wnt signaling. Interacts with LRP5 (via the first two YWTD-EGF repeat domains); the interaction inhibits Wnt-mediated signaling. Interacts with LRP6. As to expression, widely expressed at low levels with highest levels in bone, cartilage, kidney, liver, bone marrow and primary osteoblasts differentiated for 21 days. Detected in the subendothelial layer of the aortic intima (at protein level).

Its subcellular location is the secreted. It is found in the extracellular space. It localises to the extracellular matrix. In terms of biological role, negative regulator of bone growth that acts through inhibition of Wnt signaling and bone formation. The protein is Sclerostin of Homo sapiens (Human).